Reading from the N-terminus, the 969-residue chain is Levansucrase (969 aa).

Residues Met1–Ala52 form the signal peptide. Low complexity predominate over residues Ser89–Thr103. The tract at residues Ser89–Thr169 is disordered. Residues Val106–Pro116 are compositionally biased toward polar residues. The span at Ser124 to Ala166 shows a compositional bias: low complexity. Trp286, Asp287, and Ser356 together coordinate sucrose. Catalysis depends on Asp287, which acts as the Nucleophile. Asp443 contributes to the Ca(2+) binding site. Sucrose is bound by residues Arg448 and Asp449. Gln473, Asn512, and Asp544 together coordinate Ca(2+). Glu545 lines the sucrose pocket. The Proton donor/acceptor role is filled by Glu547. Residue Arg565 participates in sucrose binding. Disordered regions lie at residues Val746–Arg843 and Ile860–Ser934. Residues Lys747–Glu758 show a composition bias toward basic and acidic residues. Residues Lys776 to Ser789 are compositionally biased toward polar residues. Positions Val872–Ser910 are enriched in basic and acidic residues. Positions Thr924–Ser934 are enriched in polar residues. A helical membrane pass occupies residues Ile938–Gly958.

The protein belongs to the glycosyl hydrolase 68 family.

The protein localises to the cell membrane. It is found in the cell surface. It catalyses the reaction [6)-beta-D-fructofuranosyl-(2-&gt;](n) alpha-D-glucopyranoside + sucrose = [6)-beta-D-fructofuranosyl-(2-&gt;](n+1) alpha-D-glucopyranoside + D-glucose. Ca(2+) may play an important structural role and promote stability of levansucrase. Catalyzes the synthesis of levan, a fructose polymer, by transferring the fructosyl moiety from sucrose to a growing acceptor molecule. Also displays sucrose hydrolase activity. The polypeptide is Levansucrase (Streptococcus salivarius).